A 784-amino-acid chain; its full sequence is Toll-like receptor 2 (784 aa).

Residues 1 to 20 (MPRALWTAWVWAVISVFTEG) form the signal peptide. Over 21 to 587 (ASDQASSLSC…ARLSLSECHR (567 aa)) the chain is Extracellular. C30 and C36 form a disulfide bridge. 19 LRR repeats span residues 54 to 77 (VKSL…RCVN), 78 to 101 (LKTL…HLRN), 102 to 125 (LEYL…SLYV), 126 to 150 (LKFL…HLPN), 151 to 175 (LRTL…GLTF), 176 to 199 (LEEL…SIQN), 200 to 223 (ISHL…IVSS), 224 to 250 (LDYL…INTS), 251 to 278 (VKKL…YVSG), 279 to 308 (ILEV…YLGN), 309 to 337 (VETL…LTGK), 338 to 361 (VKRV…HLKS), 362 to 388 (LEYL…AWPV), 389 to 414 (LQTL…TLKN), 415 to 437 (LNNL…WPGK), 438 to 457 (MKQL…CLPQ), 458 to 478 (TLEI…ILPQ), 479 to 500 (LKEL…FLPV), and 501 to 524 (LSVM…SFPQ). N114 carries an N-linked (GlcNAc...) asparagine glycan. Residue N199 is glycosylated (N-linked (GlcNAc...) asparagine). A glycan (N-linked (GlcNAc...) asparagine) is linked at N248. C353 and C382 are disulfide-bonded. An intrachain disulfide couples C432 to C454. A glycan (N-linked (GlcNAc...) asparagine) is linked at N442. Positions 525 to 579 (LKALEAGGNNFICSCDFLSFAQGQQALARVLVDWPDGYRCDAPSHVRGQRVQDAR) constitute an LRRCT domain. A helical transmembrane segment spans residues 588-608 (AAVVSAVCCALFLLLLLTGVL). At 609–784 (CHRFHGLWYM…WLNLRAAIRS (176 aa)) the chain is on the cytoplasmic side. The 144-residue stretch at 639–782 (LCYDAFVSYS…AFWLNLRAAI (144 aa)) folds into the TIR domain. A Glycyl lysine isopeptide (Lys-Gly) (interchain with G-Cter in ubiquitin) cross-link involves residue K754. The short motif at 761 to 778 (YLEWPTDETHREAFWLNL) is the ATG16L1-binding motif element.

It belongs to the Toll-like receptor family. Interacts with LY96, TLR1 and TLR6 (via extracellular domain). TLR2 seems to exist in heterodimers with either TLR1 or TLR6 before stimulation by the ligand. The heterodimers form bigger oligomers in response to their corresponding ligands as well as further heterotypic associations with other receptors such as CD14 and/or CD36. Binds MYD88 (via TIR domain). Interacts with TICAM1. Interacts with CNPY3. Interacts with ATG16L1. Interacts with PPP1R11. Interacts with TICAM2. Interacts with TIRAP. Ubiquitinated at Lys-754 by PPP1R11, leading to its degradation. Deubiquitinated by USP2. In terms of processing, glycosylation of Asn-442 is critical for secretion of the N-terminal ectodomain of TLR2.

The protein resides in the membrane. It localises to the cytoplasmic vesicle. The protein localises to the phagosome membrane. Its subcellular location is the membrane raft. Cooperates with LY96 to mediate the innate immune response to bacterial lipoproteins and other microbial cell wall components. Cooperates with TLR1 or TLR6 to mediate the innate immune response to bacterial lipoproteins or lipopeptides. Acts via MYD88 and TRAF6, leading to NF-kappa-B activation, cytokine secretion and the inflammatory response. May also promote apoptosis in response to lipoproteins. Forms activation clusters composed of several receptors depending on the ligand, these clusters trigger signaling from the cell surface and subsequently are targeted to the Golgi in a lipid-raft dependent pathway. Forms the cluster TLR2:TLR6:CD14:CD36 in response to diacylated lipopeptides and TLR2:TLR1:CD14 in response to triacylated lipopeptides. The polypeptide is Toll-like receptor 2 (TLR2) (Ovis aries (Sheep)).